Here is a 96-residue protein sequence, read N- to C-terminus: Large ribosomal subunit protein bL27 (96 aa).

The propeptide occupies 1-9; that stretch reads MLKFDIQHF. Residues 1–33 are disordered; it reads MLKFDIQHFAHKKGGGSTSNGRDSESKRLGAKR. The segment covering 22–33 has biased composition (basic and acidic residues); sequence RDSESKRLGAKR.

This sequence belongs to the bacterial ribosomal protein bL27 family. In terms of processing, the N-terminus is cleaved by ribosomal processing cysteine protease Prp.

The protein is Large ribosomal subunit protein bL27 of Listeria innocua serovar 6a (strain ATCC BAA-680 / CLIP 11262).